The chain runs to 316 residues: Transaldolase (316 aa).

Lysine 127 acts as the Schiff-base intermediate with substrate in catalysis.

It belongs to the transaldolase family. Type 2 subfamily.

The protein resides in the cytoplasm. It catalyses the reaction D-sedoheptulose 7-phosphate + D-glyceraldehyde 3-phosphate = D-erythrose 4-phosphate + beta-D-fructose 6-phosphate. It functions in the pathway carbohydrate degradation; pentose phosphate pathway; D-glyceraldehyde 3-phosphate and beta-D-fructose 6-phosphate from D-ribose 5-phosphate and D-xylulose 5-phosphate (non-oxidative stage): step 2/3. Its function is as follows. Transaldolase is important for the balance of metabolites in the pentose-phosphate pathway. This Helicobacter pylori (strain ATCC 700392 / 26695) (Campylobacter pylori) protein is Transaldolase (tal).